Consider the following 868-residue polypeptide: Leucine--tRNA ligase (868 aa).

The 'HIGH' region signature appears at 42–52 (PYPSGKLHMGH). A 'KMSKS' region motif is present at residues 627-631 (KMSKS). An ATP-binding site is contributed by K630.

The protein belongs to the class-I aminoacyl-tRNA synthetase family.

It is found in the cytoplasm. The catalysed reaction is tRNA(Leu) + L-leucine + ATP = L-leucyl-tRNA(Leu) + AMP + diphosphate. This Pseudomonas putida (strain ATCC 47054 / DSM 6125 / CFBP 8728 / NCIMB 11950 / KT2440) protein is Leucine--tRNA ligase.